The following is a 96-amino-acid chain: Protein RnfH (96 aa).

Belongs to the UPF0125 (RnfH) family.

The sequence is that of Protein RnfH from Escherichia coli O17:K52:H18 (strain UMN026 / ExPEC).